The chain runs to 577 residues: Isocitrate dehydrogenase kinase/phosphatase (577 aa).

ATP contacts are provided by residues 318–324 (APGVRGM) and K339. The active site involves D374.

This sequence belongs to the AceK family.

The protein localises to the cytoplasm. It catalyses the reaction L-seryl-[isocitrate dehydrogenase] + ATP = O-phospho-L-seryl-[isocitrate dehydrogenase] + ADP + H(+). Functionally, bifunctional enzyme which can phosphorylate or dephosphorylate isocitrate dehydrogenase (IDH) on a specific serine residue. This is a regulatory mechanism which enables bacteria to bypass the Krebs cycle via the glyoxylate shunt in response to the source of carbon. When bacteria are grown on glucose, IDH is fully active and unphosphorylated, but when grown on acetate or ethanol, the activity of IDH declines drastically concomitant with its phosphorylation. The sequence is that of Isocitrate dehydrogenase kinase/phosphatase from Pseudomonas aeruginosa (strain ATCC 15692 / DSM 22644 / CIP 104116 / JCM 14847 / LMG 12228 / 1C / PRS 101 / PAO1).